We begin with the raw amino-acid sequence, 135 residues long: MLSPKRTRFRKHHRGRMKGISYRGNSICFGRYAIQALEPAWITSRQIEAGRRAMTRNARRGGKIWVRIFPDKPVTLRPTETRMGSGKGSPEYWVAVVKPGRILYEMSGVAENIARKAISIAASKMPIRTQFITSG.

Belongs to the universal ribosomal protein uL16 family. In terms of assembly, part of the 50S ribosomal subunit.

It localises to the plastid. Its subcellular location is the chloroplast. This chain is Large ribosomal subunit protein uL16c, found in Cucumis sativus (Cucumber).